Consider the following 438-residue polypeptide: Trigger factor (438 aa).

A PPIase FKBP-type domain is found at Asp-160–Pro-245.

This sequence belongs to the FKBP-type PPIase family. Tig subfamily.

It is found in the cytoplasm. The catalysed reaction is [protein]-peptidylproline (omega=180) = [protein]-peptidylproline (omega=0). Involved in protein export. Acts as a chaperone by maintaining the newly synthesized protein in an open conformation. Functions as a peptidyl-prolyl cis-trans isomerase. This Francisella tularensis subsp. tularensis (strain FSC 198) protein is Trigger factor.